A 191-amino-acid chain; its full sequence is Protein YceI (191 aa).

Positions 1 to 22 (MKKSLLGLTFASLMFSAGSAVA) are cleaved as a signal peptide.

This sequence belongs to the UPF0312 family. Type 1 subfamily.

The protein localises to the periplasm. The polypeptide is Protein YceI (Escherichia coli O17:K52:H18 (strain UMN026 / ExPEC)).